A 517-amino-acid polypeptide reads, in one-letter code: MVSQGAFAGMSRRAFLAKAAGAGAAAVLTDWAAPVIEKAYGAGPCSGHLTDIEHIVLCLQENRSFDHYFGTLSAVDGFDTPTPLFQQKGWNPETQALDPTGITLPYRINTTGGPNGVGECVNDPDHQWIAAHLSWNGGANDGWLPAQARTRSVANTPVVMGYYARPDIPIHYLLADTFTICDQYFSSLLGGTMPNRLYWISATVNPDGDQGGPQIVEPAIQPKLTFTWRIMPQNLSDAGISWKVYNSKLLGGLNDTSLSRNGYVGSFKQAADPRSDLARYGIAPAYPWDFIRDVINNTLPQVSWVVPLTVESEHPSFPVAVGAVTIVNLIRVLLRNPAVWEKTALIIAYDEHGGFFDHVTPLTAPEGTPGEWIPNSVDIDKVDGSGGIRGPIGLGFRVPCFVISPYSRGGLMVHDRFDHTSQLQLIGKRFGVPVPNLTPWRASVTGDMTSAFNFAAPPDPSPPNLDHPVRQLPKVAKCVPNVVLGFLNEGLPYRVPYPQTTPVQESGPARPIPSGIC.

The tat-type signal signal peptide spans 1–39 (MVSQGAFAGMSRRAFLAKAAGAGAAAVLTDWAAPVIEKA).

It belongs to the bacterial phospholipase C family. In terms of processing, predicted to be exported by the Tat system. The position of the signal peptide cleavage has not been experimentally proven.

Its subcellular location is the secreted. The protein resides in the cell wall. It carries out the reaction a 1,2-diacyl-sn-glycero-3-phosphocholine + H2O = phosphocholine + a 1,2-diacyl-sn-glycerol + H(+). The enzyme catalyses 1,2-dihexadecanoyl-sn-glycero-3-phosphocholine + H2O = 1,2-dihexadecanoyl-sn-glycerol + phosphocholine + H(+). Functionally, involved in virulence. Induces cytotoxic effects on mouse macrophage cell lines, via direct or indirect enzymatic hydrolysis of cell membrane phospholipids. Hydrolyzes phosphatidylcholine. Does not have hemolytic activity. The chain is Phospholipase C C from Mycobacterium tuberculosis (strain ATCC 25618 / H37Rv).